The primary structure comprises 354 residues: Ferredoxin--NADP reductase (354 aa).

The FAD site is built by Asp-42, Gln-50, Tyr-55, Ile-95, Phe-130, Asp-299, and Thr-339.

Belongs to the ferredoxin--NADP reductase type 2 family. As to quaternary structure, homodimer. Requires FAD as cofactor.

It catalyses the reaction 2 reduced [2Fe-2S]-[ferredoxin] + NADP(+) + H(+) = 2 oxidized [2Fe-2S]-[ferredoxin] + NADPH. In Acidovorax sp. (strain JS42), this protein is Ferredoxin--NADP reductase.